Reading from the N-terminus, the 580-residue chain is L-aspartate oxidase (580 aa).

Residues 26–29, K49, 56–63, and D227 contribute to the FAD site; these read SGVA and STRWAQGG. R297 functions as the Proton donor/acceptor in the catalytic mechanism. FAD is bound by residues E382 and 398-399; that span reads SL. Positions 556 to 580 are disordered; the sequence is VHTTDTPEFPPTVHGAQPTHRPQEQ.

Belongs to the FAD-dependent oxidoreductase 2 family. NadB subfamily. FAD serves as cofactor.

It is found in the cytoplasm. The catalysed reaction is L-aspartate + O2 = iminosuccinate + H2O2. Its pathway is cofactor biosynthesis; NAD(+) biosynthesis; iminoaspartate from L-aspartate (oxidase route): step 1/1. Catalyzes the oxidation of L-aspartate to iminoaspartate, the first step in the de novo biosynthesis of NAD(+). This Streptomyces coelicolor (strain ATCC BAA-471 / A3(2) / M145) protein is L-aspartate oxidase (nadB).